Consider the following 461-residue polypeptide: Homocitrate synthase (461 aa).

A Pyruvate carboxyltransferase domain is found at 4 to 259 (VGILDSTLRE…IEVVKLDKLQ (256 aa)). Arg-12 serves as a coordination point for 2-oxoglutarate. Glu-13 provides a ligand contact to Mg(2+). The 2-oxoglutarate site is built by His-76, Arg-136, and Thr-170. The Mg(2+) site is built by His-198 and His-200. The Proton acceptor role is filled by His-292.

The protein belongs to the alpha-IPM synthase/homocitrate synthase family. Homocitrate synthase LYS20/LYS21 subfamily. Requires Mg(2+) as cofactor. Mn(2+) serves as cofactor.

The catalysed reaction is acetyl-CoA + 2-oxoglutarate + H2O = (2R)-homocitrate + CoA + H(+). The protein operates within amino-acid biosynthesis; L-lysine biosynthesis via AAA pathway; L-alpha-aminoadipate from 2-oxoglutarate: step 1/5. Catalyzes the aldol-type condensation of 2-oxoglutarate with acetyl-CoA to yield homocitrate. Carries out the first step of the alpha-aminoadipate (AAA) lysine biosynthesis pathway. This is Homocitrate synthase from Saccharolobus solfataricus (strain ATCC 35092 / DSM 1617 / JCM 11322 / P2) (Sulfolobus solfataricus).